A 540-amino-acid polypeptide reads, in one-letter code: Arylsulfatase K (540 aa).

The signal sequence occupies residues 1–22 (MLLLWVSVVAASALAAPAPGAD). Asp44 and Cys84 together coordinate Ca(2+). The active-site Nucleophile is Cys84. A 3-oxoalanine (Cys) modification is found at Cys84. An N-linked (GlcNAc...) asparagine glycan is attached at Asn112. Lys132 lines the substrate pocket. Asn197 carries an N-linked (GlcNAc...) asparagine glycan. His255 contacts substrate. Asn266 is a glycosylation site (N-linked (GlcNAc...) asparagine). Positions 317 and 318 each coordinate Ca(2+). Asn379, Asn417, and Asn502 each carry an N-linked (GlcNAc...) asparagine glycan.

This sequence belongs to the sulfatase family. Requires Ca(2+) as cofactor. Post-translationally, the conversion to 3-oxoalanine (also known as C-formylglycine, FGly), of a serine or cysteine residue in prokaryotes and of a cysteine residue in eukaryotes, is critical for catalytic activity. In terms of processing, the 75-kDa precursor undergoes proteolytic processing to yield a 23 kDa form. N-glycosylated with both high mannose and complex type sugars.

It is found in the secreted. The protein localises to the lysosome. It carries out the reaction an aryl sulfate + H2O = a phenol + sulfate + H(+). It catalyses the reaction Hydrolysis of the 2-sulfate groups of the 2-O-sulfo-D-glucuronate residues of chondroitin sulfate, heparin and heparitin sulfate.. Catalyzes the hydrolysis of pseudosubstrates such as p-nitrocatechol sulfate and p-nitrophenyl sulfate. Catalyzes the hydrolysis of the 2-sulfate groups of the 2-O-sulfo-D-glucuronate residues of chondroitin sulfate, heparin and heparitin sulfate. Acts selectively on 2-sulfoglucuronate and lacks activity against 2-sulfoiduronate. The chain is Arylsulfatase K (ARSK) from Bos taurus (Bovine).